The primary structure comprises 255 residues: Taurine import ATP-binding protein TauB (255 aa).

The ABC transporter domain maps to 2–229 (LQISHLYADY…RFVAGESSRS (228 aa)). 34–41 (GPSGCGKT) serves as a coordination point for ATP.

This sequence belongs to the ABC transporter superfamily. Taurine importer (TC 3.A.1.17.1) family. In terms of assembly, the complex is composed of two ATP-binding proteins (TauB), two transmembrane proteins (TauC) and a solute-binding protein (TauA).

The protein localises to the cell inner membrane. It carries out the reaction taurine(out) + ATP + H2O = taurine(in) + ADP + phosphate + H(+). Part of the ABC transporter complex TauABC involved in taurine import. Responsible for energy coupling to the transport system. This chain is Taurine import ATP-binding protein TauB, found in Escherichia coli O6:K15:H31 (strain 536 / UPEC).